A 176-amino-acid chain; its full sequence is MNPKRLRITGPEDLTDAYDTMPFRCLNGSMPPKTPLNFVFKENDSHVSNGVGLKKDCIESIDDLNLDDWSEQQESILLMCYENELQKPITCTPMGPICLWAPPEPVLRSVHNTLLKMGWSISEKKMKKKLLELLAKNKKRRTMRKLEIDTNLSFLTDVQRDSPIIENAPLQSPFHF.

This is an uncharacterized protein from Schizosaccharomyces pombe (strain 972 / ATCC 24843) (Fission yeast).